Here is a 120-residue protein sequence, read N- to C-terminus: Ribonuclease P protein component 2 (120 aa).

The protein belongs to the eukaryotic/archaeal RNase P protein component 2 family. In terms of assembly, consists of a catalytic RNA component and at least 4-5 protein subunits.

The protein localises to the cytoplasm. The enzyme catalyses Endonucleolytic cleavage of RNA, removing 5'-extranucleotides from tRNA precursor.. Part of ribonuclease P, a protein complex that generates mature tRNA molecules by cleaving their 5'-ends. This Thermococcus kodakarensis (strain ATCC BAA-918 / JCM 12380 / KOD1) (Pyrococcus kodakaraensis (strain KOD1)) protein is Ribonuclease P protein component 2.